The primary structure comprises 31 residues: Cyclotide hyen-I (31 aa).

A cross-link (cyclopeptide (Gly-Asp)) is located at residues 1–31; it reads GSTPCGESCVWIPCISGIVGCSCSNKVCYMD. Intrachain disulfides connect Cys5–Cys21, Cys9–Cys23, and Cys14–Cys28.

In terms of processing, this is a cyclic peptide. Detected in seeds (at protein level).

Functionally, probably participates in a plant defense mechanism. This chain is Cyclotide hyen-I, found in Pigea enneasperma (Spade flower).